Reading from the N-terminus, the 135-residue chain is Large ribosomal subunit protein mL41B (135 aa).

Residues 1-13 (MGLITKIARGLVR) constitute a mitochondrion transit peptide.

It belongs to the mitochondrion-specific ribosomal protein mL41 family. Component of the mitochondrial ribosome large subunit (39S) which comprises a 16S rRNA and about 50 distinct proteins.

The protein resides in the mitochondrion. Functionally, component of the mitochondrial ribosome large subunit. Also involved in apoptosis and cell cycle. The polypeptide is Large ribosomal subunit protein mL41B (mrpl41-b) (Xenopus laevis (African clawed frog)).